Here is a 367-residue protein sequence, read N- to C-terminus: Selenoprotein Pa (367 aa).

Residues Met-1–Ala-19 form the signal peptide. Position 59 (Sec-59) is a non-standard amino acid, selenocysteine. N-linked (GlcNAc...) asparagine glycosylation occurs at Asn-109. Positions Glu-191–Arg-220 are enriched in basic and acidic residues. Residues Glu-191–Val-241 are disordered. Positions His-221–Gly-237 are enriched in basic residues. Non-standard amino acids (selenocysteine) are located at Sec-267, Sec-273, Sec-279, Sec-290, Sec-292, Sec-294, Sec-310, Sec-320, Sec-322, Sec-336, Sec-338, Sec-346, Sec-353, Sec-355, Sec-362, and Sec-364. Residues Leu-309–Lys-367 form a disordered region. A compositionally biased stretch (basic and acidic residues) spans Lys-326 to Sec-336.

Belongs to the selenoprotein P family.

Its subcellular location is the secreted. Its function is as follows. Might be responsible for some of the extracellular antioxidant defense properties of selenium or might be involved in the transport of selenium. The chain is Selenoprotein Pa (sepp1a) from Danio rerio (Zebrafish).